The sequence spans 206 residues: 2-phospho-L-lactate guanylyltransferase (206 aa).

This sequence belongs to the CofC family. As to quaternary structure, homodimer.

The enzyme catalyses (2S)-2-phospholactate + GTP + H(+) = (2S)-lactyl-2-diphospho-5'-guanosine + diphosphate. Its pathway is cofactor biosynthesis; coenzyme F420 biosynthesis. Guanylyltransferase that catalyzes the activation of (2S)-2-phospholactate (2-PL) as (2S)-lactyl-2-diphospho-5'-guanosine, via the condensation of 2-PL with GTP. It is involved in the biosynthesis of coenzyme F420, a hydride carrier cofactor. In Archaeoglobus profundus (strain DSM 5631 / JCM 9629 / NBRC 100127 / Av18), this protein is 2-phospho-L-lactate guanylyltransferase.